The following is a 402-amino-acid chain: Protein HAIKU1 (402 aa).

4 disordered regions span residues 1-44 (MDRP…LQTQ), 63-135 (TGSP…QQPM), 160-266 (SSLG…LVPS), and 346-402 (QPLT…WNDY). Residues 24–44 (LHQSTFAASTSNGAAPRLQTQ) are compositionally biased toward polar residues. A VQ motif is present at residues 55-64 (FRSIVQQLTG). The span at 76–87 (QNNSLRPQNTRL) shows a compositional bias: polar residues. Pro residues predominate over residues 103-113 (VPLPSMAPPQS). Residues 160 to 173 (SSLGDSGPNANQMQ) show a composition bias toward polar residues. The segment covering 218 to 240 (MPAQSQSQSQPQPQPQPQQHMMP) has biased composition (low complexity). A compositionally biased stretch (pro residues) spans 257–266 (YLPPPGLVPS). A compositionally biased stretch (polar residues) spans 349–358 (TPNFSFSQIA). Pro residues predominate over residues 371–380 (QGPPQPPPSP). The span at 381-390 (GLMFPLSPSG) shows a compositional bias: low complexity.

In terms of assembly, interacts with WRKY10. Interacts with MPK6.

The protein localises to the nucleus. Its function is as follows. Modulates seed size by negatively regulating the cellularization of syncytial endosperm. May function by binding and modulating the activity of WRKY10 transcription factor. In Arabidopsis thaliana (Mouse-ear cress), this protein is Protein HAIKU1.